The sequence spans 271 residues: Formamidopyrimidine-DNA glycosylase (271 aa).

The active-site Schiff-base intermediate with DNA is the Pro-2. Glu-3 (proton donor) is an active-site residue. The active-site Proton donor; for beta-elimination activity is Lys-58. 2 residues coordinate DNA: His-91 and Arg-109. The FPG-type zinc finger occupies 236 to 270; that stretch reads FVYGREGLACRVCATPVRRVVIGQRSTFFCPRCQR. Catalysis depends on Arg-260, which acts as the Proton donor; for delta-elimination activity.

This sequence belongs to the FPG family. As to quaternary structure, monomer. Zn(2+) serves as cofactor.

It carries out the reaction Hydrolysis of DNA containing ring-opened 7-methylguanine residues, releasing 2,6-diamino-4-hydroxy-5-(N-methyl)formamidopyrimidine.. The enzyme catalyses 2'-deoxyribonucleotide-(2'-deoxyribose 5'-phosphate)-2'-deoxyribonucleotide-DNA = a 3'-end 2'-deoxyribonucleotide-(2,3-dehydro-2,3-deoxyribose 5'-phosphate)-DNA + a 5'-end 5'-phospho-2'-deoxyribonucleoside-DNA + H(+). Its function is as follows. Involved in base excision repair of DNA damaged by oxidation or by mutagenic agents. Acts as a DNA glycosylase that recognizes and removes damaged bases. Has a preference for oxidized purines, such as 7,8-dihydro-8-oxoguanine (8-oxoG). Has AP (apurinic/apyrimidinic) lyase activity and introduces nicks in the DNA strand. Cleaves the DNA backbone by beta-delta elimination to generate a single-strand break at the site of the removed base with both 3'- and 5'-phosphates. This is Formamidopyrimidine-DNA glycosylase from Aromatoleum aromaticum (strain DSM 19018 / LMG 30748 / EbN1) (Azoarcus sp. (strain EbN1)).